A 369-amino-acid chain; its full sequence is Anhydro-N-acetylmuramic acid kinase (369 aa).

11-18 (GTSMDAVD) lines the ATP pocket.

The protein belongs to the anhydro-N-acetylmuramic acid kinase family.

It catalyses the reaction 1,6-anhydro-N-acetyl-beta-muramate + ATP + H2O = N-acetyl-D-muramate 6-phosphate + ADP + H(+). It functions in the pathway amino-sugar metabolism; 1,6-anhydro-N-acetylmuramate degradation. It participates in cell wall biogenesis; peptidoglycan recycling. Functionally, catalyzes the specific phosphorylation of 1,6-anhydro-N-acetylmuramic acid (anhMurNAc) with the simultaneous cleavage of the 1,6-anhydro ring, generating MurNAc-6-P. Is required for the utilization of anhMurNAc either imported from the medium or derived from its own cell wall murein, and thus plays a role in cell wall recycling. This Idiomarina loihiensis (strain ATCC BAA-735 / DSM 15497 / L2-TR) protein is Anhydro-N-acetylmuramic acid kinase.